We begin with the raw amino-acid sequence, 157 residues long: Transcription elongation factor GreA (157 aa).

Residues Arg-13–Gln-75 are a coiled coil. The segment at Glu-113 to Val-142 is disordered.

It belongs to the GreA/GreB family.

Functionally, necessary for efficient RNA polymerase transcription elongation past template-encoded arresting sites. The arresting sites in DNA have the property of trapping a certain fraction of elongating RNA polymerases that pass through, resulting in locked ternary complexes. Cleavage of the nascent transcript by cleavage factors such as GreA or GreB allows the resumption of elongation from the new 3'terminus. GreA releases sequences of 2 to 3 nucleotides. The protein is Transcription elongation factor GreA of Roseiflexus sp. (strain RS-1).